The sequence spans 135 residues: Histone H2A (135 aa).

This sequence belongs to the histone H2A family. In terms of assembly, the nucleosome is a histone octamer containing two molecules each of H2A, H2B, H3 and H4 assembled in one H3-H4 heterotetramer and two H2A-H2B heterodimers. The octamer wraps approximately 147 bp of DNA.

The protein localises to the nucleus. It localises to the chromosome. Core component of nucleosome. Nucleosomes wrap and compact DNA into chromatin, limiting DNA accessibility to the cellular machineries which require DNA as a template. Histones thereby play a central role in transcription regulation, DNA repair, DNA replication and chromosomal stability. DNA accessibility is regulated via a complex set of post-translational modifications of histones, also called histone code, and nucleosome remodeling. This is Histone H2A from Trypanosoma cruzi.